Consider the following 541-residue polypeptide: Chaperonin GroEL (541 aa).

Residues 29–32 (TLGP), 86–90 (DGTTT), G413, 477–479 (DAL), and D493 each bind ATP.

It belongs to the chaperonin (HSP60) family. As to quaternary structure, forms a cylinder of 14 subunits composed of two heptameric rings stacked back-to-back. Interacts with the co-chaperonin GroES.

It localises to the cytoplasm. The enzyme catalyses ATP + H2O + a folded polypeptide = ADP + phosphate + an unfolded polypeptide.. In terms of biological role, together with its co-chaperonin GroES, plays an essential role in assisting protein folding. The GroEL-GroES system forms a nano-cage that allows encapsulation of the non-native substrate proteins and provides a physical environment optimized to promote and accelerate protein folding. The chain is Chaperonin GroEL from Clostridium botulinum (strain Loch Maree / Type A3).